Reading from the N-terminus, the 163-residue chain is 3-isopropylmalate dehydratase small subunit (163 aa).

This sequence belongs to the LeuD family. LeuD type 2 subfamily. As to quaternary structure, heterodimer of LeuC and LeuD.

The enzyme catalyses (2R,3S)-3-isopropylmalate = (2S)-2-isopropylmalate. It participates in amino-acid biosynthesis; L-leucine biosynthesis; L-leucine from 3-methyl-2-oxobutanoate: step 2/4. Catalyzes the isomerization between 2-isopropylmalate and 3-isopropylmalate, via the formation of 2-isopropylmaleate. In Ruminiclostridium cellulolyticum (strain ATCC 35319 / DSM 5812 / JCM 6584 / H10) (Clostridium cellulolyticum), this protein is 3-isopropylmalate dehydratase small subunit.